The chain runs to 238 residues: Aspartate/glutamate leucyltransferase (238 aa).

This sequence belongs to the R-transferase family. Bpt subfamily.

It is found in the cytoplasm. It catalyses the reaction N-terminal L-glutamyl-[protein] + L-leucyl-tRNA(Leu) = N-terminal L-leucyl-L-glutamyl-[protein] + tRNA(Leu) + H(+). The catalysed reaction is N-terminal L-aspartyl-[protein] + L-leucyl-tRNA(Leu) = N-terminal L-leucyl-L-aspartyl-[protein] + tRNA(Leu) + H(+). Functionally, functions in the N-end rule pathway of protein degradation where it conjugates Leu from its aminoacyl-tRNA to the N-termini of proteins containing an N-terminal aspartate or glutamate. This is Aspartate/glutamate leucyltransferase from Nitrosococcus oceani (strain ATCC 19707 / BCRC 17464 / JCM 30415 / NCIMB 11848 / C-107).